The following is a 279-amino-acid chain: Biotin synthase (279 aa).

Residues 2–228 (KTIMLCAICS…ETRVMIAGGR (227 aa)) form the Radical SAM core domain. Cys-17, Cys-21, and Cys-24 together coordinate [4Fe-4S] cluster. Residues Cys-61, Cys-96, Cys-154, and Arg-221 each contribute to the [2Fe-2S] cluster site.

It belongs to the radical SAM superfamily. Biotin synthase family. As to quaternary structure, homodimer. Requires [4Fe-4S] cluster as cofactor. It depends on [2Fe-2S] cluster as a cofactor.

The catalysed reaction is (4R,5S)-dethiobiotin + (sulfur carrier)-SH + 2 reduced [2Fe-2S]-[ferredoxin] + 2 S-adenosyl-L-methionine = (sulfur carrier)-H + biotin + 2 5'-deoxyadenosine + 2 L-methionine + 2 oxidized [2Fe-2S]-[ferredoxin]. It functions in the pathway cofactor biosynthesis; biotin biosynthesis; biotin from 7,8-diaminononanoate: step 2/2. In terms of biological role, catalyzes the conversion of dethiobiotin (DTB) to biotin by the insertion of a sulfur atom into dethiobiotin via a radical-based mechanism. The protein is Biotin synthase of Campylobacter concisus (strain 13826).